Consider the following 93-residue polypeptide: Small ribosomal subunit protein bS6 (93 aa).

Belongs to the bacterial ribosomal protein bS6 family.

Functionally, binds together with bS18 to 16S ribosomal RNA. The chain is Small ribosomal subunit protein bS6 from Treponema denticola (strain ATCC 35405 / DSM 14222 / CIP 103919 / JCM 8153 / KCTC 15104).